The sequence spans 308 residues: MTSKLEQLKQFTTVVADTGDFEAIARVKPVDATTNPSLLLKAAAIPAYAELLNASVRDCKGDVGLASDRFGVAVGQEILKVIPGRISTEVDARLSFDQDAVLKRAHRLIELYDKAGVGRDRVLIKIASTWEGIRAAEILEKEGIQTNLTLLFSFAQAAACADAGVFLISPFVGRIYDWYKKANGNDYTGADDPGVQSVTRIYNYYKANDYKTVVMGASFRNLSQIEQLAGCDRLTISPDLIEKLAADTGKLERKLAPGHAGEARLSLNEAQFRWLSNEDAMATEKLAEGIRQFARDQEKLEALLQAKL.

Lysine 125 (schiff-base intermediate with substrate) is an active-site residue.

It belongs to the transaldolase family. Type 1 subfamily. As to quaternary structure, homodimer.

The protein localises to the cytoplasm. The enzyme catalyses D-sedoheptulose 7-phosphate + D-glyceraldehyde 3-phosphate = D-erythrose 4-phosphate + beta-D-fructose 6-phosphate. It functions in the pathway carbohydrate degradation; pentose phosphate pathway; D-glyceraldehyde 3-phosphate and beta-D-fructose 6-phosphate from D-ribose 5-phosphate and D-xylulose 5-phosphate (non-oxidative stage): step 2/3. In terms of biological role, transaldolase is important for the balance of metabolites in the pentose-phosphate pathway. This Pseudomonas fluorescens (strain Pf0-1) protein is Transaldolase.